The chain runs to 215 residues: S-crystallin 4 (215 aa).

The GST N-terminal domain occupies 2 to 80; the sequence is PSYTLHYFNH…YLAREFGFHG (79 aa). The GST C-terminal domain maps to 82-215; sequence NNMDMARVDY…YLQKRSRTEF (134 aa).

This sequence belongs to the GST superfamily. As to expression, lens.

S-crystallins are structural components of squids and octopi eye lens. Contains relatively little if any GST activity. The sequence is that of S-crystallin 4 from Enteroctopus dofleini (North Pacific giant octopus).